A 587-amino-acid chain; its full sequence is Protein IQ-DOMAIN 31 (587 aa).

Residues 57 to 80 form a disordered region; that stretch reads ETNTVDRSGGMLETQNVGPEEISD. Residue serine 79 is modified to Phosphoserine. 3 consecutive IQ domains span residues 112-140, 141-163, and 164-188; these read REIA…GIIR, LQAL…SVMG, and IVRL…VYRK. The calmodulin-binding stretch occupies residues 149-159; it reads LVRRQAVATLF. Residues 176 to 183 carry the Nuclear localization signal motif; that stretch reads IRKSDIGV. A disordered region spans residues 344–587; it reads NPVVESSIQP…AKTTPAERKR (244 aa). Composition is skewed to basic and acidic residues over residues 357-373 and 390-413; these read PRKE…KTRE and CDEK…EMEV. Residues 424–434 show a composition bias toward polar residues; that stretch reads ALDSSLVNQID. 2 stretches are compositionally biased toward basic and acidic residues: residues 435 to 472 and 482 to 494; these read SNEK…ENQK and KTER…HHET. Polar residues-rich tracts occupy residues 495–506 and 544–561; these read SPSIPSYMQATK and RITS…SGDK.

Belongs to the IQD family. In terms of assembly, binds to multiple calmodulin (CaM) in the presence of Ca(2+) and CaM-like proteins.

It is found in the nucleus. Its subcellular location is the nucleus envelope. The protein localises to the cytoplasm. The protein resides in the cytoskeleton. It localises to the cell membrane. In terms of biological role, may be involved in cooperative interactions with calmodulins or calmodulin-like proteins. Recruits calmodulin proteins to microtubules, thus being a potential scaffold in cellular signaling and trafficking. May associate with nucleic acids and regulate gene expression at the transcriptional or post-transcriptional level. The chain is Protein IQ-DOMAIN 31 from Arabidopsis thaliana (Mouse-ear cress).